A 239-amino-acid chain; its full sequence is MLVIPAIDLQSGRCVRLKQGRFDQVTQFSVFPIERALHFAKLGAKRLHVVDLDGARSGKMQQLELICSMQKTGIAIQAGGGIRSIEQALECSNAGISQLVIGSLAITNPDLTIQIIEKIKPENIVLALDVRVDTKVPLLAINGWQNNSTSSLWEVVSYYENHGIKHILCTDIACDGMMNGPNFDLYQQAVEYFPQIAWQASGGIRHMQDITTLGSLGISAVILGLMLYQDNVNFEELLC.

Residue D8 is the Proton acceptor of the active site. D129 acts as the Proton donor in catalysis.

It belongs to the HisA/HisF family.

The protein localises to the cytoplasm. It carries out the reaction 1-(5-phospho-beta-D-ribosyl)-5-[(5-phospho-beta-D-ribosylamino)methylideneamino]imidazole-4-carboxamide = 5-[(5-phospho-1-deoxy-D-ribulos-1-ylimino)methylamino]-1-(5-phospho-beta-D-ribosyl)imidazole-4-carboxamide. Its pathway is amino-acid biosynthesis; L-histidine biosynthesis; L-histidine from 5-phospho-alpha-D-ribose 1-diphosphate: step 4/9. This chain is 1-(5-phosphoribosyl)-5-[(5-phosphoribosylamino)methylideneamino] imidazole-4-carboxamide isomerase, found in Legionella pneumophila (strain Lens).